The primary structure comprises 267 residues: Putative transcription factor Ovo-like 1 (267 aa).

C2H2-type zinc fingers lie at residues 118–140 (FTCR…MKCH), 146–168 (HLCT…VRTH), 174–197 (YKCS…KKIH), and 213–235 (YVCE…LKEH).

As to expression, expressed in fetal kidney, and also in adult pancreas and placenta. Not expressed in intestine, peripheral blood lymphocytes and ovary.

The protein resides in the nucleus. Functionally, putative transcription factor. Involved in hair formation and spermatogenesis. May function in the differentiation and/or maintenance of the urogenital system. The polypeptide is Putative transcription factor Ovo-like 1 (OVOL1) (Homo sapiens (Human)).